A 253-amino-acid chain; its full sequence is tRNA pseudouridine synthase A (253 aa).

The Nucleophile role is filled by Asp-53. Tyr-112 lines the substrate pocket.

The protein belongs to the tRNA pseudouridine synthase TruA family. As to quaternary structure, homodimer.

The catalysed reaction is uridine(38/39/40) in tRNA = pseudouridine(38/39/40) in tRNA. Its function is as follows. Formation of pseudouridine at positions 38, 39 and 40 in the anticodon stem and loop of transfer RNAs. The sequence is that of tRNA pseudouridine synthase A from Lactococcus lactis subsp. cremoris (strain SK11).